Reading from the N-terminus, the 481-residue chain is Serine--tRNA ligase (481 aa).

284-286 (TAE) serves as a coordination point for L-serine. An ATP-binding site is contributed by 315 to 317 (RAE). L-serine is bound at residue Glu338. Residue 405 to 408 (EISS) coordinates ATP. Ser440 is an L-serine binding site.

Belongs to the class-II aminoacyl-tRNA synthetase family. Type-1 seryl-tRNA synthetase subfamily. Homodimer. The tRNA molecule binds across the dimer.

The protein resides in the cytoplasm. The enzyme catalyses tRNA(Ser) + L-serine + ATP = L-seryl-tRNA(Ser) + AMP + diphosphate + H(+). It carries out the reaction tRNA(Sec) + L-serine + ATP = L-seryl-tRNA(Sec) + AMP + diphosphate + H(+). It participates in aminoacyl-tRNA biosynthesis; selenocysteinyl-tRNA(Sec) biosynthesis; L-seryl-tRNA(Sec) from L-serine and tRNA(Sec): step 1/1. Its function is as follows. Catalyzes the attachment of serine to tRNA(Ser). Is also able to aminoacylate tRNA(Sec) with serine, to form the misacylated tRNA L-seryl-tRNA(Sec), which will be further converted into selenocysteinyl-tRNA(Sec). This is Serine--tRNA ligase from Rhodopseudomonas palustris (strain BisB18).